We begin with the raw amino-acid sequence, 394 residues long: MKTYQVDKNGYYGEFGGAYVPEILHQCVENLQNTYLQVLESDSFKEKFDQLLRDYVGRPSPLYLAKRLSEKYGCKIYLKREDLNHTGAHKINNTIGQILLARRMGKSRIIAETGAGQHGVATATVCALMNMECIVYMGKTDVERQHANVQKMEMLGATVVPVTSGNMTLKDATNEAIRDWCCHPSDTYYIIGSTVGPHPYPDMVARLQSVISEEIKKQLLEKEGRDHPDYLIACVGGGSNAAGTIYHFVDDERVKIVLAEAGGKGIHSGMSAATIQLGKEGIIHGARTLVMQNEDGQIEEPYSVSAGLDYPGIGPIHANLSVKHRAQILAVDDDEALEAAFELTRLEGIIPALESAHALGALAKVNFKPEEVVVLTVSGRGDKDMDTYINYKLS.

K90 is modified (N6-(pyridoxal phosphate)lysine).

It belongs to the TrpB family. As to quaternary structure, tetramer of two alpha and two beta chains. Pyridoxal 5'-phosphate serves as cofactor.

It catalyses the reaction (1S,2R)-1-C-(indol-3-yl)glycerol 3-phosphate + L-serine = D-glyceraldehyde 3-phosphate + L-tryptophan + H2O. It participates in amino-acid biosynthesis; L-tryptophan biosynthesis; L-tryptophan from chorismate: step 5/5. Functionally, the beta subunit is responsible for the synthesis of L-tryptophan from indole and L-serine. The protein is Tryptophan synthase beta chain of Parabacteroides distasonis (strain ATCC 8503 / DSM 20701 / CIP 104284 / JCM 5825 / NCTC 11152).